A 345-amino-acid polypeptide reads, in one-letter code: Tropomodulin-4 (345 aa).

The segment at 42–63 is disordered; that stretch reads NMLLPAGLRQRDQTKKSPTGPL.

The protein belongs to the tropomodulin family. In terms of assembly, binds to the N-terminus of tropomyosin and to actin.

The protein resides in the cytoplasm. Its subcellular location is the cytoskeleton. In terms of biological role, blocks the elongation and depolymerization of the actin filaments at the pointed end. The Tmod/TM complex contributes to the formation of the short actin protofilament, which in turn defines the geometry of the membrane skeleton. In Bos taurus (Bovine), this protein is Tropomodulin-4 (TMOD4).